The following is a 232-amino-acid chain: Biosynthetic peptidoglycan transglycosylase (232 aa).

A helical transmembrane segment spans residues tyrosine 12–proline 31.

This sequence belongs to the glycosyltransferase 51 family.

Its subcellular location is the cell inner membrane. It catalyses the reaction [GlcNAc-(1-&gt;4)-Mur2Ac(oyl-L-Ala-gamma-D-Glu-L-Lys-D-Ala-D-Ala)](n)-di-trans,octa-cis-undecaprenyl diphosphate + beta-D-GlcNAc-(1-&gt;4)-Mur2Ac(oyl-L-Ala-gamma-D-Glu-L-Lys-D-Ala-D-Ala)-di-trans,octa-cis-undecaprenyl diphosphate = [GlcNAc-(1-&gt;4)-Mur2Ac(oyl-L-Ala-gamma-D-Glu-L-Lys-D-Ala-D-Ala)](n+1)-di-trans,octa-cis-undecaprenyl diphosphate + di-trans,octa-cis-undecaprenyl diphosphate + H(+). It participates in cell wall biogenesis; peptidoglycan biosynthesis. Its function is as follows. Peptidoglycan polymerase that catalyzes glycan chain elongation from lipid-linked precursors. This is Biosynthetic peptidoglycan transglycosylase from Pseudomonas aeruginosa (strain ATCC 15692 / DSM 22644 / CIP 104116 / JCM 14847 / LMG 12228 / 1C / PRS 101 / PAO1).